A 440-amino-acid polypeptide reads, in one-letter code: Chromosome partition protein MukF (440 aa).

Residues 208 to 236 (LSETSGTLRELQDTLEAAGDKLQANLLRI) are leucine-zipper.

Belongs to the MukF family. As to quaternary structure, interacts, and probably forms a ternary complex, with MukE and MukB via its C-terminal region. The complex formation is stimulated by calcium or magnesium. It is required for an interaction between MukE and MukB.

It is found in the cytoplasm. It localises to the nucleoid. Involved in chromosome condensation, segregation and cell cycle progression. May participate in facilitating chromosome segregation by condensation DNA from both sides of a centrally located replisome during cell division. Not required for mini-F plasmid partitioning. Probably acts via its interaction with MukB and MukE. Overexpression results in anucleate cells. It has a calcium binding activity. The sequence is that of Chromosome partition protein MukF from Escherichia coli O127:H6 (strain E2348/69 / EPEC).